The sequence spans 53 residues: UPF0391 membrane protein azo1750 (53 aa).

2 helical membrane-spanning segments follow: residues 6 to 26 (VIFL…IAAG) and 30 to 50 (IAKI…VLGM).

Belongs to the UPF0391 family.

It localises to the cell membrane. This is UPF0391 membrane protein azo1750 from Azoarcus sp. (strain BH72).